The chain runs to 256 residues: GTP cyclohydrolase FolE2 (256 aa).

The protein belongs to the GTP cyclohydrolase IV family.

The catalysed reaction is GTP + H2O = 7,8-dihydroneopterin 3'-triphosphate + formate + H(+). The protein operates within cofactor biosynthesis; 7,8-dihydroneopterin triphosphate biosynthesis; 7,8-dihydroneopterin triphosphate from GTP: step 1/1. In terms of biological role, converts GTP to 7,8-dihydroneopterin triphosphate. The chain is GTP cyclohydrolase FolE2 from Caldicellulosiruptor bescii (strain ATCC BAA-1888 / DSM 6725 / KCTC 15123 / Z-1320) (Anaerocellum thermophilum).